The following is a 599-amino-acid chain: UvrABC system protein C (599 aa).

Positions 19-95 constitute a GIY-YIG domain; that stretch reads ESTGVYIFYD…IKKYRPIMNV (77 aa). One can recognise a UVR domain in the interval 206–241; it reads EEIIEKLYDQMQEYSKNLEFEKAAKIRDKIRLLQNL.

Belongs to the UvrC family. In terms of assembly, interacts with UvrB in an incision complex.

It localises to the cytoplasm. Functionally, the UvrABC repair system catalyzes the recognition and processing of DNA lesions. UvrC both incises the 5' and 3' sides of the lesion. The N-terminal half is responsible for the 3' incision and the C-terminal half is responsible for the 5' incision. The sequence is that of UvrABC system protein C from Dictyoglomus thermophilum (strain ATCC 35947 / DSM 3960 / H-6-12).